A 70-amino-acid polypeptide reads, in one-letter code: MLNPSIDSLLQKIDSKYTLVTVAAKRAREMQLANNCVVEKPVSHKCVGKALEEIDAEALSYVPSEDKVAE.

Belongs to the RNA polymerase subunit omega family. The RNAP catalytic core consists of 2 alpha, 1 beta, 1 beta' and 1 omega subunit. When a sigma factor is associated with the core the holoenzyme is formed, which can initiate transcription.

It catalyses the reaction RNA(n) + a ribonucleoside 5'-triphosphate = RNA(n+1) + diphosphate. In terms of biological role, promotes RNA polymerase assembly. Latches the N- and C-terminal regions of the beta' subunit thereby facilitating its interaction with the beta and alpha subunits. This chain is DNA-directed RNA polymerase subunit omega, found in Bacillus cereus (strain B4264).